Reading from the N-terminus, the 184-residue chain is DOMON domain-containing protein CBG21755 (184 aa).

Positions 1-20 are cleaved as a signal peptide; sequence MIVPISLLFLFLSFVPFSYS. The DOMON domain occupies 28-145; sequence EVASMSWMVK…CVNWIVVPGG (118 aa). N49 carries N-linked (GlcNAc...) asparagine glycosylation.

The protein localises to the secreted. This chain is DOMON domain-containing protein CBG21755, found in Caenorhabditis briggsae.